Consider the following 224-residue polypeptide: Protein GrpE (224 aa).

Residues 1–72 are disordered; that stretch reads MEKERDVAQE…KAKEEQNEEL (72 aa). Residues 10–19 are compositionally biased toward polar residues; it reads EQATYEQESP. Residues 20–67 show a composition bias toward basic and acidic residues; that stretch reads NAERQEELKENEHQEKNAPEEQEKVREENGRQDAQKDEIGDPEKAKEE.

Belongs to the GrpE family. In terms of assembly, homodimer.

Its subcellular location is the cytoplasm. Participates actively in the response to hyperosmotic and heat shock by preventing the aggregation of stress-denatured proteins, in association with DnaK and GrpE. It is the nucleotide exchange factor for DnaK and may function as a thermosensor. Unfolded proteins bind initially to DnaJ; upon interaction with the DnaJ-bound protein, DnaK hydrolyzes its bound ATP, resulting in the formation of a stable complex. GrpE releases ADP from DnaK; ATP binding to DnaK triggers the release of the substrate protein, thus completing the reaction cycle. Several rounds of ATP-dependent interactions between DnaJ, DnaK and GrpE are required for fully efficient folding. This Parageobacillus thermoglucosidasius (Geobacillus thermoglucosidasius) protein is Protein GrpE.